Consider the following 33-residue polypeptide: FLKPSVAGFLLQKIGVIESLLEKFAVGTESIAK.

Lys-13 contacts AMP. Lys-13 contributes to the ATP binding site.

Belongs to the phosphoglycerate kinase family. In terms of assembly, monomer. It depends on Mg(2+) as a cofactor.

It catalyses the reaction (2R)-3-phosphoglycerate + ATP = (2R)-3-phospho-glyceroyl phosphate + ADP. This Pseudotsuga menziesii (Douglas-fir) protein is Phosphoglycerate kinase.